The chain runs to 486 residues: Malonate-semialdehyde dehydrogenase (486 aa).

5 residues coordinate NAD(+): F154, K178, E181, R182, and S231. C286 (nucleophile) is an active-site residue. NAD(+) is bound at residue E386.

It belongs to the aldehyde dehydrogenase family. IolA subfamily. As to quaternary structure, homotetramer.

The enzyme catalyses 3-oxopropanoate + NAD(+) + CoA + H2O = hydrogencarbonate + acetyl-CoA + NADH + H(+). It carries out the reaction 2-methyl-3-oxopropanoate + NAD(+) + CoA + H2O = propanoyl-CoA + hydrogencarbonate + NADH + H(+). It participates in polyol metabolism; myo-inositol degradation into acetyl-CoA; acetyl-CoA from myo-inositol: step 7/7. Its function is as follows. Catalyzes the oxidation of malonate semialdehyde (MSA) and methylmalonate semialdehyde (MMSA) into acetyl-CoA and propanoyl-CoA, respectively. Is involved in a myo-inositol catabolic pathway. Bicarbonate, and not CO2, is the end-product of the enzymatic reaction. The protein is Malonate-semialdehyde dehydrogenase of Bacillus cereus (strain B4264).